Reading from the N-terminus, the 193-residue chain is MTKKHHKEQEEIQETIKTEAAEENVGDETVAIPAATESDIEAEIAARDAEIQKLRDEVMRRAAEFENFRKQKEREAAQSGKRMLENTVRDLLPLLDDLKRLMEHIPAELQEMAEAKPFVEGVELIRKNFKSLLESKGVKEIEALGKVLDVNFHEAITQIDVPDTEPDTIVQEYQTGYTLGDRVIRHAKVIVAK.

A disordered region spans residues 1–26 (MTKKHHKEQEEIQETIKTEAAEENVG). Over residues 7 to 20 (KEQEEIQETIKTEA) the composition is skewed to basic and acidic residues.

This sequence belongs to the GrpE family. As to quaternary structure, homodimer.

It localises to the cytoplasm. In terms of biological role, participates actively in the response to hyperosmotic and heat shock by preventing the aggregation of stress-denatured proteins, in association with DnaK and GrpE. It is the nucleotide exchange factor for DnaK and may function as a thermosensor. Unfolded proteins bind initially to DnaJ; upon interaction with the DnaJ-bound protein, DnaK hydrolyzes its bound ATP, resulting in the formation of a stable complex. GrpE releases ADP from DnaK; ATP binding to DnaK triggers the release of the substrate protein, thus completing the reaction cycle. Several rounds of ATP-dependent interactions between DnaJ, DnaK and GrpE are required for fully efficient folding. The sequence is that of Protein GrpE from Chlorobaculum parvum (strain DSM 263 / NCIMB 8327) (Chlorobium vibrioforme subsp. thiosulfatophilum).